A 507-amino-acid chain; its full sequence is Cell cycle serine/threonine-protein kinase hsk1 (507 aa).

Position 22 is a phosphoserine (Ser-22). Residues 68 to 433 (YRLIEKIGEG…AEEALDHDFL (366 aa)) enclose the Protein kinase domain. Residues 74-82 (IGEGTFSSV) and Lys-129 contribute to the ATP site. Residue Asp-216 is the Proton acceptor of the active site. Thr-291 carries the phosphothreonine modification. The segment at 475-507 (FKEQEETDEPTSLSKRKRSIDEILPNDALQDGA) is disordered. At Ser-493 the chain carries Phosphoserine.

It belongs to the protein kinase superfamily. Ser/Thr protein kinase family. CDC7 subfamily. Heterodimer with the regulatory subunit him1/dfp1. May form homooligomeric complexes. Interacts with mcm10. Post-translationally, autophosphorylated. Phosphorylated by cds1 in vitro.

It localises to the nucleus. It catalyses the reaction L-seryl-[protein] + ATP = O-phospho-L-seryl-[protein] + ADP + H(+). It carries out the reaction L-threonyl-[protein] + ATP = O-phospho-L-threonyl-[protein] + ADP + H(+). Its activity is regulated as follows. Phosphorylation of exogenous substrates activated by Dfp1. Functionally, required for G1/S transition. Plays a role in DNA replication checkpoint signaling through regulating rad3 and cds1. Involved in the maintenance of mitotic chromosome structures during S phase through regulating the function of rad21. Required for initiation of mitotic DNA replication through phosphorylating mcm2/cdc19. Required for genome integrity. In Schizosaccharomyces pombe (strain 972 / ATCC 24843) (Fission yeast), this protein is Cell cycle serine/threonine-protein kinase hsk1 (hsk1).